The chain runs to 329 residues: Bile salt hydrolase/transferase (329 aa).

Catalysis depends on Cys-2, which acts as the Nucleophile; acyl-thioester intermediate. The deoxycholate site is built by Cys-2 and Arg-18. Asn-82 provides a ligand contact to taurine.

Belongs to the peptidase C59 family. In terms of assembly, homotetramer. The tetramer consists of a dimer of dimers.

It catalyses the reaction glycocholate + H2O = cholate + glycine. The catalysed reaction is cholate + taurine = taurocholate + H2O. It carries out the reaction taurodeoxycholate + H2O = deoxycholate + taurine. The enzyme catalyses glycodeoxycholate + H2O = deoxycholate + glycine. It catalyses the reaction chenodeoxycholate + glycine = glycochenodeoxycholate + H2O. The catalysed reaction is taurochenodeoxycholate + H2O = chenodeoxycholate + taurine. It carries out the reaction an L-alpha-amino acid + cholate = an N-choloyl-L-alpha-amino acid + H2O. The enzyme catalyses an L-alpha-amino acid + taurocholate = an N-choloyl-L-alpha-amino acid + taurine. It catalyses the reaction glycocholate + an L-alpha-amino acid = an N-choloyl-L-alpha-amino acid + glycine. The catalysed reaction is cholate + L-histidine = L-histidocholate + H2O. It carries out the reaction taurocholate + L-histidine = L-histidocholate + taurine. The enzyme catalyses glycocholate + L-histidine = L-histidocholate + glycine. It catalyses the reaction cholate + L-arginine = L-arginocholate + H2O. The catalysed reaction is taurocholate + L-arginine = L-arginocholate + taurine. It carries out the reaction glycocholate + L-arginine = L-arginocholate + glycine. The enzyme catalyses cholate + L-phenylalanine = L-phenylalanocholate + H2O. It catalyses the reaction taurocholate + L-phenylalanine = L-phenylalanocholate + taurine. It functions in the pathway lipid metabolism; bile acid biosynthesis. Functionally, possesses dual functions in bile acid metabolism. Acts as a bile salt hydrolase that catalyzes the deconjugation of glycine- and taurine-linked bile salts, which occurs naturally in the intestines of humans, releasing amino acid residues and deconjugated bile salts (bile acids). Can hydrolyze the amide bond in major human conjugated bile salts, such as glycocholate (GCA), taurocholate (TCA) and taurodeoxycholate (TDCA). Shows a slight preference for taurine-conjugated bile acids as substrates. Also acts as an amine N-acyltransferase that conjugates a wide variety of amino acids to conjugated and non-conjugated bile acids, thus producing bacterial bile acid amidates (BBAAs) - also named microbially conjugated bile acids (MCBAs) - in the gastrointestinal tract. These BBAAs may facilitate communication between the microbiota and host through the activation of human ligand-activated transcription factors. This is Bile salt hydrolase/transferase (cbh) from Clostridium perfringens (strain 13 / Type A).